A 431-amino-acid chain; its full sequence is TDP-daunosamine transferase DnrS (431 aa).

Residues 1 to 23 (MKVLVTAFAMDAHFNGVVPLAWA) form the signal peptide.

This sequence belongs to the glycosyltransferase 28 family.

The enzyme catalyses dTDP-beta-L-daunosamine + epsilon-rhodomycinone = rhodomycin D + dTDP + H(+). Its pathway is antibiotic biosynthesis; daunorubicin biosynthesis. It functions in the pathway antibiotic biosynthesis; carminomycin biosynthesis. Its function is as follows. Involved in the biosynthesis of the anthracyclines carminomycin and daunorubicin (daunomycin) which are aromatic polyketide antibiotics that exhibit high cytotoxicity and are widely applied in the chemotherapy of a variety of cancers. Catalyzes the addition of the TDP activated glycoside, L-daunosamine-TDP (2,3,6-trideoxy-3-aminohexose-TDP) at position C-7 of epsilon-rhodomycinone to yield rhodomycin D. Glycosylation is a prerequisite for biological activity of anthracyclines and requires DnrQ which seems to act as an activator. This chain is TDP-daunosamine transferase DnrS (dnrS), found in Streptomyces peucetius.